The chain runs to 225 residues: Uridylate kinase (225 aa).

9–10 (GS) provides a ligand contact to ATP. G44 contributes to the UMP binding site. G45 and R49 together coordinate ATP. UMP contacts are provided by residues D66 and 114-120 (THPGHTT). T140, N141, Y146, and D149 together coordinate ATP.

It belongs to the UMP kinase family. In terms of assembly, homohexamer.

It is found in the cytoplasm. It catalyses the reaction UMP + ATP = UDP + ADP. It participates in pyrimidine metabolism; CTP biosynthesis via de novo pathway; UDP from UMP (UMPK route): step 1/1. With respect to regulation, inhibited by UTP. Functionally, catalyzes the reversible phosphorylation of UMP to UDP. The chain is Uridylate kinase from Thermococcus onnurineus (strain NA1).